A 329-amino-acid chain; its full sequence is Transmembrane protein I329L (329 aa).

Positions 1–31 (MLRVFIFFVFLGSGLAGRIKPQITCKYFISE) are cleaved as a signal peptide. 6 N-linked (GlcNAc...) asparagine; by host glycosylation sites follow: Asn32, Asn39, Asn44, Asn76, Asn82, and Asn101. The Extracellular segment spans residues 32-239 (NNTWYKYNVT…NTERYKNCYP (208 aa)). The stretch at 112 to 133 (ELKFLDLRYNNLQFIDYNILRK) is one LRR repeat. N-linked (GlcNAc...) asparagine; by host glycosylation is found at Asn185 and Asn219. Cys195 and Cys237 form a disulfide bridge. Residues 240-260 (FVLVSILCSCISFLFLIICLL) traverse the membrane as a helical segment. At 261 to 329 (RSICKKYSCT…EKKASCSRRK (69 aa)) the chain is on the cytoplasmic side.

This sequence belongs to the asfivirus I329L family. Highly glycosylated.

It localises to the host endoplasmic reticulum membrane. The protein resides in the host Golgi apparatus membrane. In terms of biological role, viral TLR3 homolog that probably prevents TLR3 dimerization and subsequent induction of IFN. Inhibits dsRNA-stimulated activation of NF-kB and IRF3. This chain is Transmembrane protein I329L, found in Ornithodoros (relapsing fever ticks).